The primary structure comprises 273 residues: Formamidopyrimidine-DNA glycosylase (273 aa).

The Schiff-base intermediate with DNA role is filled by Pro2. Residue Glu3 is the Proton donor of the active site. Catalysis depends on Lys57, which acts as the Proton donor; for beta-elimination activity. His90, Arg109, and Lys150 together coordinate DNA. The FPG-type zinc finger occupies 235 to 269 (KVYGRAGKECPVCSSKIEEEKIGQRNSFWCGKCQF). Residue Arg259 is the Proton donor; for delta-elimination activity of the active site.

Belongs to the FPG family. As to quaternary structure, monomer. Zn(2+) is required as a cofactor.

The catalysed reaction is Hydrolysis of DNA containing ring-opened 7-methylguanine residues, releasing 2,6-diamino-4-hydroxy-5-(N-methyl)formamidopyrimidine.. It carries out the reaction 2'-deoxyribonucleotide-(2'-deoxyribose 5'-phosphate)-2'-deoxyribonucleotide-DNA = a 3'-end 2'-deoxyribonucleotide-(2,3-dehydro-2,3-deoxyribose 5'-phosphate)-DNA + a 5'-end 5'-phospho-2'-deoxyribonucleoside-DNA + H(+). Its function is as follows. Involved in base excision repair of DNA damaged by oxidation or by mutagenic agents. Acts as a DNA glycosylase that recognizes and removes damaged bases. Has a preference for oxidized purines, such as 7,8-dihydro-8-oxoguanine (8-oxoG). Has AP (apurinic/apyrimidinic) lyase activity and introduces nicks in the DNA strand. Cleaves the DNA backbone by beta-delta elimination to generate a single-strand break at the site of the removed base with both 3'- and 5'-phosphates. This Aliivibrio fischeri (strain MJ11) (Vibrio fischeri) protein is Formamidopyrimidine-DNA glycosylase.